Reading from the N-terminus, the 307-residue chain is DDRGK domain-containing protein 1 (307 aa).

Residues methionine 1–aspartate 2 lie on the Lumenal side of the membrane. Residues leucine 3–leucine 23 form a helical membrane-spanning segment. Topologically, residues glutamine 24 to serine 307 are cytoplasmic. Composition is skewed to low complexity over residues glutamate 32 to glycine 43 and arginine 54 to alanine 83. Residues glutamate 32–lysine 162 are disordered. Residues lysine 117–lysine 162 are compositionally biased toward basic and acidic residues.

Belongs to the DDRGK1 family. In terms of assembly, interacts with Atg9; the interaction is transient.

The protein localises to the endoplasmic reticulum membrane. Its function is as follows. Substrate adapter for ufmylation, the covalent attachment of the ubiquitin-like modifier UFM1 to substrate proteins. Required for ufmylation of Atg9; protects the nervous system during aging, possibly by stabilizing Atg9 and supporting its function. This chain is DDRGK domain-containing protein 1, found in Drosophila willistoni (Fruit fly).